We begin with the raw amino-acid sequence, 664 residues long: Gametogenetin-binding protein 2 (664 aa).

Disordered stretches follow at residues 375–425 (QEKK…NTSE) and 447–476 (KKGL…QEGS). Residues 376–388 (EKKRQKKNRRKNK) are compositionally biased toward basic residues. Positions 452-475 (PHSNVSDCGYSSSLEGSEPGSQEG) are enriched in polar residues.

Its subcellular location is the cytoplasm. Its function is as follows. May be involved in spermatogenesis. The protein is Gametogenetin-binding protein 2 (ggnbp2) of Xenopus laevis (African clawed frog).